A 1379-amino-acid chain; its full sequence is DNA-directed RNA polymerase subunit beta (1379 aa).

Belongs to the RNA polymerase beta chain family. As to quaternary structure, the RNAP catalytic core consists of 2 alpha, 1 beta, 1 beta' and 1 omega subunit. When a sigma factor is associated with the core the holoenzyme is formed, which can initiate transcription.

It catalyses the reaction RNA(n) + a ribonucleoside 5'-triphosphate = RNA(n+1) + diphosphate. DNA-dependent RNA polymerase catalyzes the transcription of DNA into RNA using the four ribonucleoside triphosphates as substrates. This Rhizobium leguminosarum bv. trifolii (strain WSM2304) protein is DNA-directed RNA polymerase subunit beta.